Here is a 218-residue protein sequence, read N- to C-terminus: Large ribosomal subunit protein bL25 (218 aa).

Belongs to the bacterial ribosomal protein bL25 family. CTC subfamily. As to quaternary structure, part of the 50S ribosomal subunit; part of the 5S rRNA/L5/L18/L25 subcomplex. Contacts the 5S rRNA. Binds to the 5S rRNA independently of L5 and L18.

This is one of the proteins that binds to the 5S RNA in the ribosome where it forms part of the central protuberance. This Polaromonas naphthalenivorans (strain CJ2) protein is Large ribosomal subunit protein bL25.